A 301-amino-acid chain; its full sequence is Glycine--tRNA ligase alpha subunit (301 aa).

Belongs to the class-II aminoacyl-tRNA synthetase family. Tetramer of two alpha and two beta subunits.

It is found in the cytoplasm. The enzyme catalyses tRNA(Gly) + glycine + ATP = glycyl-tRNA(Gly) + AMP + diphosphate. This Shewanella halifaxensis (strain HAW-EB4) protein is Glycine--tRNA ligase alpha subunit.